The chain runs to 706 residues: Ribosomal RNA large subunit methyltransferase K/L (706 aa).

In terms of domain architecture, THUMP spans 43–154; it reads LLYQSLLWSR…RDMASVALDL (112 aa).

Belongs to the methyltransferase superfamily. RlmKL family.

The protein localises to the cytoplasm. It catalyses the reaction guanosine(2445) in 23S rRNA + S-adenosyl-L-methionine = N(2)-methylguanosine(2445) in 23S rRNA + S-adenosyl-L-homocysteine + H(+). The catalysed reaction is guanosine(2069) in 23S rRNA + S-adenosyl-L-methionine = N(2)-methylguanosine(2069) in 23S rRNA + S-adenosyl-L-homocysteine + H(+). Specifically methylates the guanine in position 2445 (m2G2445) and the guanine in position 2069 (m7G2069) of 23S rRNA. The sequence is that of Ribosomal RNA large subunit methyltransferase K/L from Serratia proteamaculans (strain 568).